A 462-amino-acid polypeptide reads, in one-letter code: Na(+)/H(+) antiporter NhaA 2 (462 aa).

Residues 1-31 form a disordered region; that stretch reads MKSSTREQTPVTSPTPHDPTPPTPPRGSTPL. The segment covering 16–27 has biased composition (pro residues); it reads PHDPTPPTPPRG. 11 consecutive transmembrane segments (helical) span residues 52–72, 96–116, 134–154, 165–185, 195–215, 218–238, 244–264, 309–329, 337–357, 382–402, and 408–428; these read IGGA…NSPW, LTLG…IAGL, LVPV…YVLV, GWAI…AVIS, FLLT…AIFY, TLAV…GLLV, SWWL…ASGI, FAVP…LSGL, VALG…LGAT, LLGG…FGAG, and HVKV…AVVL.

Belongs to the NhaA Na(+)/H(+) (TC 2.A.33) antiporter family.

The protein localises to the cell membrane. The catalysed reaction is Na(+)(in) + 2 H(+)(out) = Na(+)(out) + 2 H(+)(in). In terms of biological role, na(+)/H(+) antiporter that extrudes sodium in exchange for external protons. The polypeptide is Na(+)/H(+) antiporter NhaA 2 (Kineococcus radiotolerans (strain ATCC BAA-149 / DSM 14245 / SRS30216)).